Reading from the N-terminus, the 512-residue chain is Kynurenine 3-monooxygenase (512 aa).

The protein belongs to the aromatic-ring hydroxylase family. KMO subfamily. The cofactor is FAD.

It is found in the mitochondrion outer membrane. It catalyses the reaction L-kynurenine + NADPH + O2 + H(+) = 3-hydroxy-L-kynurenine + NADP(+) + H2O. Its pathway is cofactor biosynthesis; NAD(+) biosynthesis; quinolinate from L-kynurenine: step 1/3. Catalyzes the hydroxylation of L-kynurenine (L-Kyn) to form 3-hydroxy-L-kynurenine (L-3OHKyn). Required for synthesis of quinolinic acid. In Aspergillus clavatus (strain ATCC 1007 / CBS 513.65 / DSM 816 / NCTC 3887 / NRRL 1 / QM 1276 / 107), this protein is Kynurenine 3-monooxygenase (bna4).